The following is a 401-amino-acid chain: Imidazolonepropionase (401 aa).

Residues histidine 70 and histidine 72 each coordinate Fe(3+). Histidine 70 and histidine 72 together coordinate Zn(2+). The 4-imidazolone-5-propanoate site is built by arginine 79, tyrosine 142, and histidine 175. Tyrosine 142 serves as a coordination point for N-formimidoyl-L-glutamate. Histidine 240 provides a ligand contact to Fe(3+). Histidine 240 contributes to the Zn(2+) binding site. Glutamine 243 is a 4-imidazolone-5-propanoate binding site. Aspartate 315 serves as a coordination point for Fe(3+). Aspartate 315 contacts Zn(2+). 2 residues coordinate N-formimidoyl-L-glutamate: asparagine 317 and glycine 319. Serine 320 is a binding site for 4-imidazolone-5-propanoate.

It belongs to the metallo-dependent hydrolases superfamily. HutI family. Zn(2+) is required as a cofactor. Requires Fe(3+) as cofactor.

The protein resides in the cytoplasm. It carries out the reaction 4-imidazolone-5-propanoate + H2O = N-formimidoyl-L-glutamate. It functions in the pathway amino-acid degradation; L-histidine degradation into L-glutamate; N-formimidoyl-L-glutamate from L-histidine: step 3/3. Its function is as follows. Catalyzes the hydrolytic cleavage of the carbon-nitrogen bond in imidazolone-5-propanoate to yield N-formimidoyl-L-glutamate. It is the third step in the universal histidine degradation pathway. This chain is Imidazolonepropionase, found in Ruegeria pomeroyi (strain ATCC 700808 / DSM 15171 / DSS-3) (Silicibacter pomeroyi).